Here is a 70-residue protein sequence, read N- to C-terminus: UPF0519 protein B (70 aa).

This sequence belongs to the UPF0519 family.

This chain is UPF0519 protein B (sigN122), found in Dictyostelium discoideum (Social amoeba).